A 149-amino-acid chain; its full sequence is Nucleoside diphosphate kinase (149 aa).

Lysine 9, phenylalanine 57, arginine 85, threonine 91, arginine 102, and asparagine 112 together coordinate ATP. The active-site Pros-phosphohistidine intermediate is histidine 115.

It belongs to the NDK family. In terms of assembly, homotetramer. The cofactor is Mg(2+).

It localises to the cytoplasm. It carries out the reaction a 2'-deoxyribonucleoside 5'-diphosphate + ATP = a 2'-deoxyribonucleoside 5'-triphosphate + ADP. The enzyme catalyses a ribonucleoside 5'-diphosphate + ATP = a ribonucleoside 5'-triphosphate + ADP. In terms of biological role, major role in the synthesis of nucleoside triphosphates other than ATP. The ATP gamma phosphate is transferred to the NDP beta phosphate via a ping-pong mechanism, using a phosphorylated active-site intermediate. This is Nucleoside diphosphate kinase from Nostoc punctiforme (strain ATCC 29133 / PCC 73102).